Reading from the N-terminus, the 259-residue chain is tRNA (guanine-N(7)-)-methyltransferase (259 aa).

A compositionally biased stretch (basic and acidic residues) spans 1–11 (MSNTDNSDKNT). The disordered stretch occupies residues 1 to 29 (MSNTDNSDKNTKPTGYRPPQTDFNTEFGN). The S-adenosyl-L-methionine site is built by E89, E114, D141, and D164. D164 is an active-site residue. Residues K168, D200, and 238-241 (TKFE) each bind substrate.

Belongs to the class I-like SAM-binding methyltransferase superfamily. TrmB family.

The enzyme catalyses guanosine(46) in tRNA + S-adenosyl-L-methionine = N(7)-methylguanosine(46) in tRNA + S-adenosyl-L-homocysteine. The protein operates within tRNA modification; N(7)-methylguanine-tRNA biosynthesis. Its function is as follows. Catalyzes the formation of N(7)-methylguanine at position 46 (m7G46) in tRNA. This chain is tRNA (guanine-N(7)-)-methyltransferase, found in Corynebacterium diphtheriae (strain ATCC 700971 / NCTC 13129 / Biotype gravis).